Reading from the N-terminus, the 246-residue chain is 3'(2'),5'-bisphosphate nucleotidase CysQ (246 aa).

Positions 64, 83, 85, 86, and 205 each coordinate Mg(2+). Glu-64 serves as a coordination point for substrate. Substrate contacts are provided by residues 85-88 (LDGT) and Asp-205.

Belongs to the inositol monophosphatase superfamily. CysQ family. Mg(2+) is required as a cofactor.

Its subcellular location is the cell inner membrane. It carries out the reaction adenosine 3',5'-bisphosphate + H2O = AMP + phosphate. Its function is as follows. Converts adenosine-3',5'-bisphosphate (PAP) to AMP. The protein is 3'(2'),5'-bisphosphate nucleotidase CysQ of Escherichia coli O157:H7.